Reading from the N-terminus, the 549-residue chain is TBC1 domain family member 3E (549 aa).

The region spanning 101–293 (GMPMNIRGPM…RLWDVYLVEG (193 aa)) is the Rab-GAP TBC domain. S-palmitoyl cysteine attachment occurs at residues cysteine 318 and cysteine 325. Positions 350-419 (LTRKKGDLPP…PRSSTPCPGG (70 aa)) are disordered. Over residues 398-417 (PRPIWSASPPRAPRSSTPCP) the composition is skewed to low complexity.

Ubiquitinated by a CUL7-based E3 ligase, which leads to proteasomal degradation. Post-translationally, palmitoylation is required for membrane localization and protects TBC1D3 from ubiquitination. Expressed in pancreas, thymus and testis.

It localises to the cell membrane. Its function is as follows. Acts as a GTPase activating protein for RAB5. Does not act on RAB4 or RAB11. The polypeptide is TBC1 domain family member 3E (Homo sapiens (Human)).